The sequence spans 369 residues: Anhydro-N-acetylmuramic acid kinase (369 aa).

ATP is bound at residue 12-19; that stretch reads GTSLDGVD.

Belongs to the anhydro-N-acetylmuramic acid kinase family.

The enzyme catalyses 1,6-anhydro-N-acetyl-beta-muramate + ATP + H2O = N-acetyl-D-muramate 6-phosphate + ADP + H(+). The protein operates within amino-sugar metabolism; 1,6-anhydro-N-acetylmuramate degradation. Its pathway is cell wall biogenesis; peptidoglycan recycling. Catalyzes the specific phosphorylation of 1,6-anhydro-N-acetylmuramic acid (anhMurNAc) with the simultaneous cleavage of the 1,6-anhydro ring, generating MurNAc-6-P. Is required for the utilization of anhMurNAc either imported from the medium or derived from its own cell wall murein, and thus plays a role in cell wall recycling. The sequence is that of Anhydro-N-acetylmuramic acid kinase from Shigella flexneri.